Reading from the N-terminus, the 190-residue chain is MQKKFEDCVKTILEIIGENPNREGLIKTPNRVFKAYEFLASGYTQNVKDILNDALFESSNNEMVLVRDIEFYSLCEHHLLPFFGRAHVAYIPNKKVVGLSKIPRLVEVFARRLQIQEQLTEQIAQALMENVDAKGVGVVIEARHMCVEMRGIQKANSTTTTSALRGIFLKNEKTREEFFSLINSAKQVRF.

Zn(2+)-binding residues include Cys-75, His-78, and Cys-146.

It belongs to the GTP cyclohydrolase I family. Toroid-shaped homodecamer, composed of two pentamers of five dimers.

The enzyme catalyses GTP + H2O = 7,8-dihydroneopterin 3'-triphosphate + formate + H(+). It participates in cofactor biosynthesis; 7,8-dihydroneopterin triphosphate biosynthesis; 7,8-dihydroneopterin triphosphate from GTP: step 1/1. The sequence is that of GTP cyclohydrolase 1 from Campylobacter jejuni (strain RM1221).